We begin with the raw amino-acid sequence, 126 residues long: MAIDISGRHHENDIFFRVYAGVLVEIKADRIVHVEKIDVMVKEEETQKLRDIVKEVKELIDKVGDEFDYILCERGEFFNISKDIISAILKKEVIFPKTRGELEAINIAHHVSYSVRKLLIEEKRKS.

This is an uncharacterized protein from Methanocaldococcus jannaschii (strain ATCC 43067 / DSM 2661 / JAL-1 / JCM 10045 / NBRC 100440) (Methanococcus jannaschii).